A 557-amino-acid chain; its full sequence is Aerobic glycerol-3-phosphate dehydrogenase (557 aa).

FAD is bound at residue 21–49; sequence DVVIIGGGITGAGIALDASERGMKVALVE.

This sequence belongs to the FAD-dependent glycerol-3-phosphate dehydrogenase family. The cofactor is FAD.

It is found in the cytoplasm. The enzyme catalyses a quinone + sn-glycerol 3-phosphate = dihydroxyacetone phosphate + a quinol. It participates in polyol metabolism; glycerol degradation via glycerol kinase pathway; glycerone phosphate from sn-glycerol 3-phosphate (aerobic route): step 1/1. The sequence is that of Aerobic glycerol-3-phosphate dehydrogenase (glpD) from Staphylococcus saprophyticus subsp. saprophyticus (strain ATCC 15305 / DSM 20229 / NCIMB 8711 / NCTC 7292 / S-41).